We begin with the raw amino-acid sequence, 457 residues long: Multidrug resistance protein MdtK (457 aa).

Transmembrane regions (helical) follow at residues 11-31, 53-73, 93-113, 127-147, 160-180, 188-208, 243-263, 276-296, 314-334, 350-370, 387-407, and 418-438; these read LLAL…MGFV, IWLP…PVIA, WLAG…GYII, AVGY…FQVA, GMVM…IFIY, LGGI…FIAM, LPIA…ALLV, IALN…AAVT, AART…IFTV, VVAL…SDSI, IFFI…YILA, and PAGF…LMML.

The protein belongs to the multi antimicrobial extrusion (MATE) (TC 2.A.66.1) family. MdtK subfamily.

The protein resides in the cell inner membrane. In terms of biological role, multidrug efflux pump that functions probably as a Na(+)/drug antiporter. In Salmonella enteritidis PT4 (strain P125109), this protein is Multidrug resistance protein MdtK.